Here is a 318-residue protein sequence, read N- to C-terminus: MKFDPTSPSLNIMLANPRGFCAGVDRAISIVERALELFSPPIYVRHEVVHNRYVVQNLKDRGAVFVEELDQVPDNNIVIFSAHGVSQAVRAEAKARGLRVFDATCPLVTKVHLQVTRASRKGIECILIGHAGHPEVEGTMGQYDNPNGGVYLIESPADVETLEVRDPNNLCFVTQTTLSVDDTLDIISALLKRFPSIEGPRKDDICYATQNRQDAVRNLSADVDLLIVVGSKNSSNSNRLRELALKTGTQSYLVDTADDIDSSWFENITKVAVTAGASAPEVLVQQVVQAIAKLAPSVVTEVEGRKEDTVFAVPAELR.

C21 provides a ligand contact to [4Fe-4S] cluster. (2E)-4-hydroxy-3-methylbut-2-enyl diphosphate-binding residues include H50 and H83. Dimethylallyl diphosphate-binding residues include H50 and H83. Isopentenyl diphosphate-binding residues include H50 and H83. C105 is a [4Fe-4S] cluster binding site. H133 contacts (2E)-4-hydroxy-3-methylbut-2-enyl diphosphate. H133 lines the dimethylallyl diphosphate pocket. H133 contacts isopentenyl diphosphate. E135 (proton donor) is an active-site residue. T176 serves as a coordination point for (2E)-4-hydroxy-3-methylbut-2-enyl diphosphate. A [4Fe-4S] cluster-binding site is contributed by C206. (2E)-4-hydroxy-3-methylbut-2-enyl diphosphate contacts are provided by S234, S235, N236, and S278. Dimethylallyl diphosphate is bound by residues S234, S235, N236, and S278. Residues S234, S235, N236, and S278 each contribute to the isopentenyl diphosphate site.

The protein belongs to the IspH family. Requires [4Fe-4S] cluster as cofactor.

It carries out the reaction isopentenyl diphosphate + 2 oxidized [2Fe-2S]-[ferredoxin] + H2O = (2E)-4-hydroxy-3-methylbut-2-enyl diphosphate + 2 reduced [2Fe-2S]-[ferredoxin] + 2 H(+). It catalyses the reaction dimethylallyl diphosphate + 2 oxidized [2Fe-2S]-[ferredoxin] + H2O = (2E)-4-hydroxy-3-methylbut-2-enyl diphosphate + 2 reduced [2Fe-2S]-[ferredoxin] + 2 H(+). It functions in the pathway isoprenoid biosynthesis; dimethylallyl diphosphate biosynthesis; dimethylallyl diphosphate from (2E)-4-hydroxy-3-methylbutenyl diphosphate: step 1/1. Its pathway is isoprenoid biosynthesis; isopentenyl diphosphate biosynthesis via DXP pathway; isopentenyl diphosphate from 1-deoxy-D-xylulose 5-phosphate: step 6/6. Its function is as follows. Catalyzes the conversion of 1-hydroxy-2-methyl-2-(E)-butenyl 4-diphosphate (HMBPP) into a mixture of isopentenyl diphosphate (IPP) and dimethylallyl diphosphate (DMAPP). Acts in the terminal step of the DOXP/MEP pathway for isoprenoid precursor biosynthesis. This Shewanella oneidensis (strain ATCC 700550 / JCM 31522 / CIP 106686 / LMG 19005 / NCIMB 14063 / MR-1) protein is 4-hydroxy-3-methylbut-2-enyl diphosphate reductase.